The primary structure comprises 158 residues: Cyclic pyranopterin monophosphate synthase (158 aa).

Residues 74-76 and 112-113 contribute to the substrate site; these read MCH and ME. D127 is an active-site residue.

Belongs to the MoaC family. In terms of assembly, homohexamer; trimer of dimers.

The enzyme catalyses (8S)-3',8-cyclo-7,8-dihydroguanosine 5'-triphosphate = cyclic pyranopterin phosphate + diphosphate. Its pathway is cofactor biosynthesis; molybdopterin biosynthesis. Its function is as follows. Catalyzes the conversion of (8S)-3',8-cyclo-7,8-dihydroguanosine 5'-triphosphate to cyclic pyranopterin monophosphate (cPMP). The sequence is that of Cyclic pyranopterin monophosphate synthase from Helicobacter pylori (strain HPAG1).